A 304-amino-acid chain; its full sequence is Ribokinase (304 aa).

Residues Asn12–Asp14, Gly41–Asn45, and Glu142 contribute to the substrate site. ATP contacts are provided by residues Asn186 and Thr222–Gly227. K(+)-binding residues include Asp248 and Thr250. Residues Gly253–Asp254 and Asn279 each bind ATP. Residue Asp254 participates in substrate binding. The active-site Proton acceptor is the Asp254. Positions 285, 288, 290, and 294 each coordinate K(+).

It belongs to the carbohydrate kinase PfkB family. Ribokinase subfamily. In terms of assembly, homodimer. It depends on Mg(2+) as a cofactor.

Its subcellular location is the cytoplasm. The catalysed reaction is D-ribose + ATP = D-ribose 5-phosphate + ADP + H(+). The protein operates within carbohydrate metabolism; D-ribose degradation; D-ribose 5-phosphate from beta-D-ribopyranose: step 2/2. Its activity is regulated as follows. Activated by a monovalent cation that binds near, but not in, the active site. The most likely occupant of the site in vivo is potassium. Ion binding induces a conformational change that may alter substrate affinity. In terms of biological role, catalyzes the phosphorylation of ribose at O-5 in a reaction requiring ATP and magnesium. The resulting D-ribose-5-phosphate can then be used either for sythesis of nucleotides, histidine, and tryptophan, or as a component of the pentose phosphate pathway. This is Ribokinase from Staphylococcus aureus (strain COL).